Here is a 315-residue protein sequence, read N- to C-terminus: 4-hydroxy-3-methylbut-2-enyl diphosphate reductase (315 aa).

A [4Fe-4S] cluster-binding site is contributed by C12. 2 residues coordinate (2E)-4-hydroxy-3-methylbut-2-enyl diphosphate: H41 and H74. H41 and H74 together coordinate dimethylallyl diphosphate. Positions 41 and 74 each coordinate isopentenyl diphosphate. C96 contributes to the [4Fe-4S] cluster binding site. Residue H124 participates in (2E)-4-hydroxy-3-methylbut-2-enyl diphosphate binding. Dimethylallyl diphosphate is bound at residue H124. Residue H124 participates in isopentenyl diphosphate binding. E126 functions as the Proton donor in the catalytic mechanism. Residue T168 coordinates (2E)-4-hydroxy-3-methylbut-2-enyl diphosphate. A [4Fe-4S] cluster-binding site is contributed by C198. (2E)-4-hydroxy-3-methylbut-2-enyl diphosphate is bound by residues S226, S227, N228, and S270. The dimethylallyl diphosphate site is built by S226, S227, N228, and S270. Isopentenyl diphosphate is bound by residues S226, S227, N228, and S270.

This sequence belongs to the IspH family. It depends on [4Fe-4S] cluster as a cofactor.

It carries out the reaction isopentenyl diphosphate + 2 oxidized [2Fe-2S]-[ferredoxin] + H2O = (2E)-4-hydroxy-3-methylbut-2-enyl diphosphate + 2 reduced [2Fe-2S]-[ferredoxin] + 2 H(+). The catalysed reaction is dimethylallyl diphosphate + 2 oxidized [2Fe-2S]-[ferredoxin] + H2O = (2E)-4-hydroxy-3-methylbut-2-enyl diphosphate + 2 reduced [2Fe-2S]-[ferredoxin] + 2 H(+). The protein operates within isoprenoid biosynthesis; dimethylallyl diphosphate biosynthesis; dimethylallyl diphosphate from (2E)-4-hydroxy-3-methylbutenyl diphosphate: step 1/1. Its pathway is isoprenoid biosynthesis; isopentenyl diphosphate biosynthesis via DXP pathway; isopentenyl diphosphate from 1-deoxy-D-xylulose 5-phosphate: step 6/6. Catalyzes the conversion of 1-hydroxy-2-methyl-2-(E)-butenyl 4-diphosphate (HMBPP) into a mixture of isopentenyl diphosphate (IPP) and dimethylallyl diphosphate (DMAPP). Acts in the terminal step of the DOXP/MEP pathway for isoprenoid precursor biosynthesis. This is 4-hydroxy-3-methylbut-2-enyl diphosphate reductase from Pseudomonas putida (strain ATCC 700007 / DSM 6899 / JCM 31910 / BCRC 17059 / LMG 24140 / F1).